A 589-amino-acid polypeptide reads, in one-letter code: Serine/threonine-protein kinase STE7 homolog (589 aa).

Residues 1–18 (MTRTTRIDTQEATKHKDL) are compositionally biased toward basic and acidic residues. Disordered regions lie at residues 1 to 162 (MTRT…DPDN) and 185 to 233 (RQHY…ASSQ). Residues 24 to 33 (PLSLSSNPNP) are compositionally biased toward low complexity. Residues 57-69 (VKSTSGSLRSSDM) show a composition bias toward polar residues. A compositionally biased stretch (low complexity) spans 92–121 (PTASSSATSTPTSNITGSSSASSIQFAQKS). 2 stretches are compositionally biased toward polar residues: residues 127 to 136 (IVSQTLSRPS) and 144 to 162 (SGYSSLNVNQSNRNVDPDN). Residues 185–203 (RQHYQNSHHHLPTTNRKRQ) show a composition bias toward basic residues. The segment covering 206–220 (ISSISPTKSSAASSS) has biased composition (low complexity). Residues 221–233 (LEPQIQSLPASSQ) are compositionally biased toward polar residues. Residues 249–565 (LLTLKQLGSG…QLLEDKEHFF (317 aa)) form the Protein kinase domain. ATP-binding positions include 255-263 (LGSGNSGSV) and Lys278. Residue Asp374 is the Proton acceptor of the active site. Ser402 carries the phosphoserine modification. The residue at position 408 (Thr408) is a Phosphothreonine. A disordered region spans residues 473–499 (IAAERNGQNSPSRSRKNKQKGNGYNSY).

This sequence belongs to the protein kinase superfamily. STE Ser/Thr protein kinase family. MAP kinase kinase subfamily.

It catalyses the reaction L-seryl-[protein] + ATP = O-phospho-L-seryl-[protein] + ADP + H(+). The enzyme catalyses L-threonyl-[protein] + ATP = O-phospho-L-threonyl-[protein] + ADP + H(+). It carries out the reaction L-tyrosyl-[protein] + ATP = O-phospho-L-tyrosyl-[protein] + ADP + H(+). The protein is Serine/threonine-protein kinase STE7 homolog (HST7) of Candida albicans (strain SC5314 / ATCC MYA-2876) (Yeast).